The chain runs to 639 residues: UPF0313 protein CLJ_B0249 (639 aa).

In terms of domain architecture, Radical SAM core spans 295 to 566; sequence AIKEVKFSIT…RMQRSLLQFS (272 aa). Positions 309, 313, and 316 each coordinate [4Fe-4S] cluster. A disordered region spans residues 597 to 639; the sequence is YNKPYKKSHKKNNAKNKNNNYNKNKDVSKKNKKNSLSKHKKRK. 2 stretches are compositionally biased toward basic residues: residues 600 to 610 and 626 to 639; these read PYKKSHKKNNA and KNKK…KKRK.

The protein belongs to the UPF0313 family. It depends on [4Fe-4S] cluster as a cofactor.

This is UPF0313 protein CLJ_B0249 from Clostridium botulinum (strain 657 / Type Ba4).